The primary structure comprises 187 residues: Adenylate kinase (187 aa).

10-15 provides a ligand contact to ATP; it reads GSGKGT. An NMP region spans residues 30-59; that stretch reads STGDLLRAEVAAGSPLGLKAKEVMARGDLV. AMP-binding positions include Thr-31, Arg-36, 57–59, 85–88, and Gln-92; these read DLV and GYPR. An LID region spans residues 126 to 136; it reads GRAKAEGREDD. Residue Arg-127 participates in ATP binding. The AMP site is built by Arg-133 and Arg-144. Residue Gly-172 coordinates ATP.

Belongs to the adenylate kinase family. As to quaternary structure, monomer.

The protein localises to the cytoplasm. It carries out the reaction AMP + ATP = 2 ADP. It participates in purine metabolism; AMP biosynthesis via salvage pathway; AMP from ADP: step 1/1. Functionally, catalyzes the reversible transfer of the terminal phosphate group between ATP and AMP. Plays an important role in cellular energy homeostasis and in adenine nucleotide metabolism. The polypeptide is Adenylate kinase (Xanthomonas campestris pv. campestris (strain 8004)).